The sequence spans 824 residues: Type IV secretion system protein PtlC (824 aa).

456–463 (GQSGSGKT) contacts ATP.

Belongs to the TrbE/VirB4 family.

It is found in the cell membrane. Component of the type IV secretion system ptl essential for secretion of assembled pertussis toxin (PTX) through the outer membrane. This Bordetella pertussis (strain Tohama I / ATCC BAA-589 / NCTC 13251) protein is Type IV secretion system protein PtlC (ptlC).